A 185-amino-acid chain; its full sequence is MADSHGNAKGATAHTEAGGGHKAPFPPFQKDTFASQLVSLTIAFVALYLISSRLALPRVRKTIDDRQNKIEGDIAQAQTLKNESDAALKAYEVELAAARTRAQAIGNETREKLNAEADTERKALEKRLSAKLADAEKTIASTRTAAMSNVRGIASDAATAIVQQLTGAMPDRKLVDSAVEASMKG.

A disordered region spans residues 1-24 (MADSHGNAKGATAHTEAGGGHKAP). Residues 34–56 (ASQLVSLTIAFVALYLISSRLAL) form a helical membrane-spanning segment.

It belongs to the ATPase B chain family. In terms of assembly, F-type ATPases have 2 components, F(1) - the catalytic core - and F(0) - the membrane proton channel. F(1) has five subunits: alpha(3), beta(3), gamma(1), delta(1), epsilon(1). F(0) has three main subunits: a(1), b(2) and c(10-14). The alpha and beta chains form an alternating ring which encloses part of the gamma chain. F(1) is attached to F(0) by a central stalk formed by the gamma and epsilon chains, while a peripheral stalk is formed by the delta and b chains.

Its subcellular location is the cell inner membrane. Its function is as follows. F(1)F(0) ATP synthase produces ATP from ADP in the presence of a proton or sodium gradient. F-type ATPases consist of two structural domains, F(1) containing the extramembraneous catalytic core and F(0) containing the membrane proton channel, linked together by a central stalk and a peripheral stalk. During catalysis, ATP synthesis in the catalytic domain of F(1) is coupled via a rotary mechanism of the central stalk subunits to proton translocation. Component of the F(0) channel, it forms part of the peripheral stalk, linking F(1) to F(0). The b'-subunit is a diverged and duplicated form of b found in plants and photosynthetic bacteria. This Nitrobacter hamburgensis (strain DSM 10229 / NCIMB 13809 / X14) protein is ATP synthase subunit b 2 (atpF2).